A 134-amino-acid chain; its full sequence is MLWQAYVDDHLMCDIEGHEGHRLTAAAIVGHDGSVWAQSATFPQFKPEEMNGIMTDFNEPGHLAPTGLHLGGTKYMVIQGEAGAVIRGKKGSGGITIKKTGQALVFGIYEEPVTPGQCNMVVERLGDYLLEQGL.

Cys13 and Cys118 form a disulfide bridge. The Involved in PIP2 interaction signature appears at 84–100 (AVIRGKKGSGGITIKKT). At Thr114 the chain carries Phosphothreonine.

This sequence belongs to the profilin family. In terms of processing, phosphorylated by MAP kinases.

The protein localises to the cytoplasm. The protein resides in the cytoskeleton. The polypeptide is Profilin-2 (Olea europaea (Common olive)).